Reading from the N-terminus, the 618-residue chain is Putative UDP-glucuronate:xylan alpha-glucuronosyltransferase 3 (618 aa).

Residues glycine 32 to tyrosine 54 traverse the membrane as a helical; Signal-anchor for type II membrane protein segment. Residues aspartate 379 and aspartate 381 each coordinate Mn(2+). Residues aspartate 379 to aspartate 381, asparagine 408 to glycine 410, asparagine 435 to glutamine 439, and histidine 489 to lysine 495 each bind substrate. Residue histidine 489 coordinates Mn(2+). Residues threonine 598–serine 608 are compositionally biased toward low complexity. The tract at residues threonine 598 to leucine 618 is disordered.

Belongs to the glycosyltransferase 8 family. Glycogenin subfamily. Requires Mn(2+) as cofactor.

It is found in the golgi apparatus membrane. Functionally, may be involved in the substitutions of the xylan backbone in stem glucuronoxylan. In Arabidopsis thaliana (Mouse-ear cress), this protein is Putative UDP-glucuronate:xylan alpha-glucuronosyltransferase 3 (GUX3).